We begin with the raw amino-acid sequence, 490 residues long: Betaine aldehyde dehydrogenase (490 aa).

K(+)-binding residues include threonine 26, isoleucine 27, and aspartate 93. 150–152 (GAW) serves as a coordination point for NAD(+). Lysine 162 functions as the Charge relay system in the catalytic mechanism. 176-179 (KPSE) contacts NAD(+). Valine 180 contributes to the K(+) binding site. 230 to 233 (GVAS) provides a ligand contact to NAD(+). Leucine 246 contributes to the K(+) binding site. Residue glutamate 252 is the Proton acceptor of the active site. Residues glycine 254, cysteine 286, and glutamate 387 each coordinate NAD(+). Residue cysteine 286 is the Nucleophile of the active site. Cysteine 286 is modified (cysteine sulfenic acid (-SOH)). Residues lysine 457 and glycine 460 each coordinate K(+). Glutamate 464 serves as the catalytic Charge relay system.

This sequence belongs to the aldehyde dehydrogenase family. As to quaternary structure, dimer of dimers. The cofactor is K(+).

The enzyme catalyses betaine aldehyde + NAD(+) + H2O = glycine betaine + NADH + 2 H(+). It participates in amine and polyamine biosynthesis; betaine biosynthesis via choline pathway; betaine from betaine aldehyde: step 1/1. Involved in the biosynthesis of the osmoprotectant glycine betaine. Catalyzes the irreversible oxidation of betaine aldehyde to the corresponding acid. In Escherichia coli O157:H7, this protein is Betaine aldehyde dehydrogenase.